A 158-amino-acid polypeptide reads, in one-letter code: Small ribosomal subunit protein uS7 (158 aa).

This sequence belongs to the universal ribosomal protein uS7 family. Part of the 30S ribosomal subunit. Contacts proteins S9 and S11.

One of the primary rRNA binding proteins, it binds directly to 16S rRNA where it nucleates assembly of the head domain of the 30S subunit. Is located at the subunit interface close to the decoding center, probably blocks exit of the E-site tRNA. The polypeptide is Small ribosomal subunit protein uS7 (Acidiphilium cryptum (strain JF-5)).